A 193-amino-acid chain; its full sequence is Protein B4 (193 aa).

3 helical membrane-spanning segments follow: residues 15 to 35 (FFVC…CVFF), 36 to 56 (CVYF…VFFV), and 160 to 180 (LSLC…IVFS).

The protein localises to the host membrane. The polypeptide is Protein B4 (B4) (Homo sapiens (Human)).